The chain runs to 444 residues: Protein giant-lens (444 aa).

An N-terminal signal peptide occupies residues 1 to 24; that stretch reads MPTTLMLLPCMLLLLLTAAAVAVG. Two-fingered domain 1 part repeat units follow at residues 123–165 and 285–307; these read RDVR…CRCP and CPSS…YKMC. Disulfide bonds link Cys141/Cys162, Cys147/Cys285, Cys164/Cys307, Cys316/Cys341, Cys343/Cys370, Cys378/Cys405, Cys384/Cys413, and Cys407/Cys440. Two-fingered domain repeat units follow at residues 316-370 and 378-444; these read CTHF…LFAC and CQRK…MAND. Asn333 carries an N-linked (GlcNAc...) asparagine glycan.

In terms of assembly, interacts with spi. As to expression, during embryogenesis, expression is in a segmental pattern in the ectoderm and in the nervous system. In the eye imaginal disks, expression in photoreceptor cells begins a few rows posterior to the morphogenetic furrow. Also expressed in the wing disk. In the adult, expression is seen in the retina and lamina.

The protein resides in the secreted. Functionally, regulates cell determination; development of ommatidia and optic lobe. Is a signaling molecule involved in the process of axon pathfinding in the eye. Part of the Ras pathway regulating programmed cell death in pupal eyes; activated by lozenge (lz). Antagonist for the Egfr receptor (gurken). Inhibits Egfr signaling without interacting directly with the receptor, but instead by sequestering the Egfr-activating ligand spitz (spi). The polypeptide is Protein giant-lens (aos) (Drosophila melanogaster (Fruit fly)).